Consider the following 93-residue polypeptide: Small ribosomal subunit protein uS19 (93 aa).

Belongs to the universal ribosomal protein uS19 family.

In terms of biological role, protein S19 forms a complex with S13 that binds strongly to the 16S ribosomal RNA. This is Small ribosomal subunit protein uS19 from Campylobacter hominis (strain ATCC BAA-381 / DSM 21671 / CCUG 45161 / LMG 19568 / NCTC 13146 / CH001A).